Consider the following 158-residue polypeptide: Transcription elongation factor GreA (158 aa).

The stretch at A45 to E72 forms a coiled coil.

This sequence belongs to the GreA/GreB family.

In terms of biological role, necessary for efficient RNA polymerase transcription elongation past template-encoded arresting sites. The arresting sites in DNA have the property of trapping a certain fraction of elongating RNA polymerases that pass through, resulting in locked ternary complexes. Cleavage of the nascent transcript by cleavage factors such as GreA or GreB allows the resumption of elongation from the new 3'terminus. GreA releases sequences of 2 to 3 nucleotides. The chain is Transcription elongation factor GreA from Xanthomonas campestris pv. campestris (strain ATCC 33913 / DSM 3586 / NCPPB 528 / LMG 568 / P 25).